The primary structure comprises 947 residues: Protein RRC1-like (947 aa).

Positions 1–11 are enriched in basic and acidic residues; sequence MVKDEFFLDHP. Disordered stretches follow at residues 1 to 35 and 63 to 167; these read MVKD…RMKQ and PNDN…DELP. The span at 12–34 shows a compositional bias: basic residues; that stretch reads GRKHRSRNTEKKKKPRRRERRMK. Basic and acidic residues-rich tracts occupy residues 66–84 and 104–155; these read NKLK…DSIS and KGPE…DHNS. The 82-residue stretch at 187–268 folds into the RRM domain; the sequence is TNLYVVNLSS…YELKIGWGKV (82 aa). Residues 336 to 379 form an SURP motif repeat; it reads IIDTMALNVLDGGCAFEQAIMERGRGNPLFNFLFELGSKEHTYY. The interval 412–434 is disordered; that stretch reads PPLPATRSPEHGKESRGTYAAGK. In terms of domain architecture, CID spans 444–589; the sequence is LTDSQRDEFE…GLRATFLRSR (146 aa). Positions 638–672 constitute an SAP domain; the sequence is LMNRPISELERRCRHNGLSLLGGREMMVARLVCLK. 2 disordered regions span residues 752–797 and 846–947; these read REDD…PENE and GLSG…RGMR. 3 stretches are compositionally biased toward basic and acidic residues: residues 854-876, 888-916, and 924-947; these read LPEK…RSES, LTRE…LDKD, and SSRE…RGMR.

Expressed in leaves, inflorescence stems, roots, flower buds, open flowers and siliques.

Functionally, probable SR-like splicing factor. This is Protein RRC1-like from Arabidopsis thaliana (Mouse-ear cress).